The following is a 128-amino-acid chain: Holo-[acyl-carrier-protein] synthase (128 aa).

Mg(2+) is bound by residues Asp9 and Glu56.

The protein belongs to the P-Pant transferase superfamily. AcpS family. Mg(2+) serves as cofactor.

The protein resides in the cytoplasm. The catalysed reaction is apo-[ACP] + CoA = holo-[ACP] + adenosine 3',5'-bisphosphate + H(+). Transfers the 4'-phosphopantetheine moiety from coenzyme A to a Ser of acyl-carrier-protein. The protein is Holo-[acyl-carrier-protein] synthase of Pelagibacter ubique (strain HTCC1062).